We begin with the raw amino-acid sequence, 228 residues long: MQLTNPNRDRKAVVIFSGGQDSTTCLFQAIQDYGVENVEVVTFQYGQRHAIELEKAKWIAQDLGVKQTLIDTSVIKAITQNALMDEQARIEQHGSTPNTFVDGRNALFLLYTAIYAKGQGIQDIITGVCETDFSGYPDCRDVFIKSMNVTLNLAMDYQFHLKTPLMYLTKAQTWQLADELGVLDYIRQHTHTCYMGVEQGCGECPSCVLREKGLREYLSSKSEAEIDV.

16–26 (FSGGQDSTTCL) provides a ligand contact to ATP. Residues cysteine 193, cysteine 201, cysteine 204, and cysteine 207 each contribute to the Zn(2+) site.

It belongs to the QueC family. Requires Zn(2+) as cofactor.

The enzyme catalyses 7-carboxy-7-deazaguanine + NH4(+) + ATP = 7-cyano-7-deazaguanine + ADP + phosphate + H2O + H(+). Its pathway is purine metabolism; 7-cyano-7-deazaguanine biosynthesis. Its function is as follows. Catalyzes the ATP-dependent conversion of 7-carboxy-7-deazaguanine (CDG) to 7-cyano-7-deazaguanine (preQ(0)). The chain is 7-cyano-7-deazaguanine synthase from Pasteurella multocida (strain Pm70).